The chain runs to 334 residues: MADHSTVNGSEIPVYNLKCIDLANPDVHQSAAVLKQACMESGIFYVINHGLSEELMNEFFGQMKKFFALPMDEKKKLFWNQSLRGYRPPAQAVIDNKTQQKDFGEAYHIGVDVAKDDPNCGKFFYGPNIWPPADILPGWKETMMRYQEETINVGRAIGRIIALALDLNVDFFDQPEILGNKTASYSNMFHYGVPGTDFSKEIVGAPPHCDLNFITLLATDEIWGLQICREKNAQPQLWEAIPPVKGAFIVNVGDMLEMLSNGAFRSILHRVVFGKERYSTGLFLCPSHDYVIECLPTCKSEDNPPKYPTIKTGDYILSRFRQLAADTVKDNKAV.

Positions Lys181 to Pro286 constitute a Fe2OG dioxygenase domain. The Fe cation site is built by His208, Asp210, and His269. Residue Arg277 coordinates 2-oxoglutarate.

It belongs to the iron/ascorbate-dependent oxidoreductase family. The cofactor is Fe(2+). In terms of tissue distribution, expressed in maturing fruits and in juice vesicles.

It carries out the reaction (1R,2R,3S,8R,10R,11R,15S,16S)-3-(acetyloxy)-15-(1-hydroxy-4-oxobutan-2-yl)-2,7,7,11,16-pentamethyl-5-oxo-6-oxatetracyclo[9.7.0.0(2,8).0(12,16)]octadec-12-en-10-yl acetate + 2-oxoglutarate + O2 = kihadalactone A + succinate + CO2 + 2 H2O. Its pathway is secondary metabolite biosynthesis; terpenoid biosynthesis. 2-oxoglutarate-Fe(II) type oxidoreductase involved in the biosynthesis of limonoids triterpene natural products such as limonin, a compound with insecticidal activity responsible for the bitter taste in citrus. Catalyzes the formation of kihadalactone A. The protein is Kihadalactone A synthase LFS of Citrus sinensis (Sweet orange).